The primary structure comprises 95 residues: Large ribosomal subunit protein eL43 (95 aa).

The C4-type zinc finger occupies cysteine 38–cysteine 59.

It belongs to the eukaryotic ribosomal protein eL43 family. Zn(2+) is required as a cofactor.

This chain is Large ribosomal subunit protein eL43, found in Halobacterium salinarum (strain ATCC 29341 / DSM 671 / R1).